The chain runs to 304 residues: Foldase protein PrsA (304 aa).

A signal peptide spans 1–19 (MKKKLLSVAAVASVFTLAA). Residue cysteine 20 is the site of N-palmitoyl cysteine attachment. Cysteine 20 is lipidated: S-diacylglycerol cysteine. The 92-residue stretch at 140–231 (KVEVKASHIL…FGYHIIKVTD (92 aa)) folds into the PpiC domain. Residues 285–304 (FDLDKQEQQQMQQQMQQQQQ) form a disordered region. Low complexity predominate over residues 292-304 (QQQMQQQMQQQQQ).

It belongs to the PrsA family.

Its subcellular location is the cell membrane. It carries out the reaction [protein]-peptidylproline (omega=180) = [protein]-peptidylproline (omega=0). Its function is as follows. Plays a major role in protein secretion by helping the post-translocational extracellular folding of several secreted proteins. The protein is Foldase protein PrsA of Exiguobacterium sibiricum (strain DSM 17290 / CCUG 55495 / CIP 109462 / JCM 13490 / 255-15).